Here is a 97-residue protein sequence, read N- to C-terminus: uncharacterized protein (97 aa).

The first 16 residues, 1–16 (MKQTVLLLFTALFLSG), serve as a signal peptide directing secretion. Residue Cys17 is the site of N-palmitoyl cysteine attachment. The S-diacylglycerol cysteine moiety is linked to residue Cys17.

The protein resides in the cell membrane. This is an uncharacterized protein from Bacillus subtilis (strain 168).